A 172-amino-acid chain; its full sequence is Protein-export protein SecB (172 aa).

Belongs to the SecB family. Homotetramer, a dimer of dimers. One homotetramer interacts with 1 SecA dimer.

The protein resides in the cytoplasm. In terms of biological role, one of the proteins required for the normal export of preproteins out of the cell cytoplasm. It is a molecular chaperone that binds to a subset of precursor proteins, maintaining them in a translocation-competent state. It also specifically binds to its receptor SecA. In Xylella fastidiosa (strain Temecula1 / ATCC 700964), this protein is Protein-export protein SecB.